Reading from the N-terminus, the 147-residue chain is Hemoglobin subunit epsilon (147 aa).

The region spanning 3-147 (HWSAEEKQLI…VAHALPRKYH (145 aa)) is the Globin domain. Histidine 64 and histidine 93 together coordinate heme b.

Belongs to the globin family. Heterotetramer of two epsilon chains and two alpha chains. Red blood cells.

Its function is as follows. Beta-type chain found in early embryos. In Cairina moschata (Muscovy duck), this protein is Hemoglobin subunit epsilon (HBE).